The primary structure comprises 586 residues: Dual specificity tyrosine-phosphorylation-regulated kinase 3 (586 aa).

Basic and acidic residues predominate over residues methionine 1 to alanine 13. The interval methionine 1 to glycine 187 is disordered. In terms of domain architecture, Protein kinase spans tyrosine 208–isoleucine 521. ATP contacts are provided by residues isoleucine 214–valine 222, lysine 237, and phenylalanine 287–leucine 290. Residue aspartate 334 is the Proton acceptor of the active site. Tyrosine 368 is modified (phosphotyrosine). A Nuclear localization signal motif is present at residues arginine 467–lysine 480.

The protein belongs to the protein kinase superfamily. CMGC Ser/Thr protein kinase family. MNB/DYRK subfamily. In terms of assembly, interacts with SIRT1. It depends on Mg(2+) as a cofactor. In terms of processing, ubiquitinated at anaphase by the anaphase-promoting complex (APC/C), leading to its degradation by the proteasome. Protein kinase activity is activated following autophosphorylation at Tyr-368.

It is found in the nucleus. The protein resides in the cytoplasm. It localises to the nucleus speckle. The protein localises to the cytoplasmic granule. Its subcellular location is the cytoskeleton. It is found in the microtubule organizing center. The protein resides in the centrosome. The enzyme catalyses L-seryl-[protein] + ATP = O-phospho-L-seryl-[protein] + ADP + H(+). The catalysed reaction is L-threonyl-[protein] + ATP = O-phospho-L-threonyl-[protein] + ADP + H(+). It catalyses the reaction L-tyrosyl-[protein] + ATP = O-phospho-L-tyrosyl-[protein] + ADP + H(+). Protein kinase activity is activated following autophosphorylation at Tyr-368. Its function is as follows. Dual-specificity protein kinase that promotes disassembly of several types of membraneless organelles during mitosis, such as stress granules, nuclear speckles and pericentriolar material. Dual-specificity tyrosine-regulated kinases (DYRKs) autophosphorylate a critical tyrosine residue in their activation loop and phosphorylate their substrate on serine and threonine residues. Acts as a central dissolvase of membraneless organelles during the G2-to-M transition, after the nuclear-envelope breakdown: acts by mediating phosphorylation of multiple serine and threonine residues in unstructured domains of proteins, such as SRRM1 and PCM1. Does not mediate disassembly of all membraneless organelles: disassembly of P-body and nucleolus is not regulated by DYRK3. Dissolution of membraneless organelles at the onset of mitosis is also required to release mitotic regulators, such as ZNF207, from liquid-unmixed organelles where they are sequestered and keep them dissolved during mitosis. Regulates mTORC1 by mediating the dissolution of stress granules: during stressful conditions, DYRK3 partitions from the cytosol to the stress granule, together with mTORC1 components, which prevents mTORC1 signaling. When stress signals are gone, the kinase activity of DYRK3 is required for the dissolution of stress granule and mTORC1 relocation to the cytosol: acts by mediating the phosphorylation of the mTORC1 inhibitor AKT1S1, allowing full reactivation of mTORC1 signaling. Also acts as a negative regulator of EPO-dependent erythropoiesis: may place an upper limit on red cell production during stress erythropoiesis. Inhibits cell death due to cytokine withdrawal in hematopoietic progenitor cells. Promotes cell survival upon genotoxic stress through phosphorylation of SIRT1: this in turn inhibits p53/TP53 activity and apoptosis. The chain is Dual specificity tyrosine-phosphorylation-regulated kinase 3 from Mus musculus (Mouse).